The sequence spans 878 residues: Lon protease 2 (878 aa).

The Lon N-terminal domain maps to 85–281; it reads LYLLPVKERP…KVLSLFKHEI (197 aa). Position 434 to 441 (434 to 441) interacts with ATP; that stretch reads GPPGVGKT. The region spanning 668–850 is the Lon proteolytic domain; that stretch reads NQQMGTVTGL…DDVAKLTFHI (183 aa). Active-site residues include serine 756 and lysine 799.

Belongs to the peptidase S16 family. In terms of assembly, homohexamer. Organized in a ring with a central cavity.

The protein localises to the cytoplasm. The enzyme catalyses Hydrolysis of proteins in presence of ATP.. Its function is as follows. ATP-dependent serine protease that mediates the selective degradation of mutant and abnormal proteins as well as certain short-lived regulatory proteins. Required for cellular homeostasis and for survival from DNA damage and developmental changes induced by stress. Degrades polypeptides processively to yield small peptide fragments that are 5 to 10 amino acids long. Binds to DNA in a double-stranded, site-specific manner. This Hydrogenovibrio crunogenus (strain DSM 25203 / XCL-2) (Thiomicrospira crunogena) protein is Lon protease 2.